The following is a 517-amino-acid chain: General transcription factor IIF subunit 1 (517 aa).

An N-acetylalanine modification is found at alanine 2. Residue threonine 156 is modified to Phosphothreonine. The interval 178 to 466 (QQRRLKDQDQ…DAVRRYLTRK (289 aa)) is disordered. A phosphoserine mark is found at serine 217, serine 218, serine 221, and serine 224. Residues 232 to 251 (PKAKKKAPLAKGGRKKKKKK) show a composition bias toward basic residues. Composition is skewed to acidic residues over residues 255 to 270 (DEAFEDSDDGDFEGQE) and 303 to 325 (EQSDSSEESEEEKPPEEDKEEEE). Threonine 331 is modified (phosphothreonine). Acidic residues predominate over residues 343–355 (EESDSSEESDIDS). The span at 364 to 374 (AKKKTPPKRER) shows a compositional bias: basic residues. Residues serine 377, serine 380, serine 381, and serine 385 each carry the phosphoserine modification. A compositionally biased stretch (low complexity) spans 377–391 (SGGSSRGNSRPGTPS). Position 389 is a phosphothreonine (threonine 389). Serine 391 bears the Phosphoserine mark. An N6-acetyllysine modification is found at lysine 407. The span at 428 to 452 (GPQSLSGKSTPQPPSGKTTPNSGDV) shows a compositional bias: polar residues. Phosphoserine occurs at positions 431, 433, and 436. Phosphothreonine occurs at positions 437 and 446. Serine 449 is modified (phosphoserine). Positions 503, 512, and 517 each coordinate Zn(2+).

It belongs to the TFIIF alpha subunit family. As to quaternary structure, heterodimer of an alpha and a beta subunit. Interacts with GTF2F2, CTDP1, TAF6/TAFII80 and URI1. Interacts with GTF2B (via C-terminus and preferentially via acetylated form); this interaction prevents binding of GTF2B to GTF2F2. Part of TBP-based Pol II pre-initiation complex (PIC), in which Pol II core assembles with general transcription factors and other specific initiation factors including GTF2E1, GTF2E2, GTF2F1, GTF2F2, TCEA1, ERCC2, ERCC3, GTF2H2, GTF2H3, GTF2H4, GTF2H5, GTF2A1, GTF2A2, GTF2B and TBP; this large multi-subunit PIC complex mediates DNA unwinding and targets Pol II core to the transcription start site where the first phosphodiester bond forms. Phosphorylated on Ser and other residues by TAF1 and casein kinase II-like kinases.

It is found in the nucleus. Functionally, TFIIF is a general transcription initiation factor that binds to RNA polymerase II and helps to recruit it to the initiation complex in collaboration with TFIIB. It promotes transcription elongation. The polypeptide is General transcription factor IIF subunit 1 (GTF2F1) (Homo sapiens (Human)).